The sequence spans 178 residues: uncharacterized protein (178 aa).

Positions 1 to 23 (MTMFKKISVLFFTLILAGCSSWS) are cleaved as a signal peptide.

This is an uncharacterized protein from Haemophilus influenzae (strain ATCC 51907 / DSM 11121 / KW20 / Rd).